The following is a 193-amino-acid chain: Thioredoxin peroxidase (193 aa).

Residues 3 to 161 enclose the Thioredoxin domain; that stretch reads AVVGKLAPSF…ALRLLDAFQF (159 aa). Cys48 (cysteine sulfenic acid (-SOH) intermediate) is an active-site residue.

It belongs to the peroxiredoxin family. AhpC/Prx1 subfamily. As to quaternary structure, homodimer; disulfide-linked, upon oxidation.

The enzyme catalyses a hydroperoxide + [thioredoxin]-dithiol = an alcohol + [thioredoxin]-disulfide + H2O. In terms of biological role, thiol-specific peroxidase that catalyzes the reduction of hydrogen peroxide and organic hydroperoxides to water and alcohols, respectively. Plays a role in cell protection against oxidative stress by detoxifying peroxides and as sensor of hydrogen peroxide-mediated signaling events. The polypeptide is Thioredoxin peroxidase (TPX) (Echinococcus granulosus (Hydatid tapeworm)).